Consider the following 383-residue polypeptide: Succinyl-diaminopimelate desuccinylase (383 aa).

Histidine 72 contacts Zn(2+). The active site involves aspartate 74. Aspartate 105 contributes to the Zn(2+) binding site. The active-site Proton acceptor is the glutamate 137. Residues glutamate 138, glutamate 167, and histidine 352 each coordinate Zn(2+).

This sequence belongs to the peptidase M20A family. DapE subfamily. In terms of assembly, homodimer. Zn(2+) is required as a cofactor. It depends on Co(2+) as a cofactor.

The enzyme catalyses N-succinyl-(2S,6S)-2,6-diaminopimelate + H2O = (2S,6S)-2,6-diaminopimelate + succinate. It participates in amino-acid biosynthesis; L-lysine biosynthesis via DAP pathway; LL-2,6-diaminopimelate from (S)-tetrahydrodipicolinate (succinylase route): step 3/3. Catalyzes the hydrolysis of N-succinyl-L,L-diaminopimelic acid (SDAP), forming succinate and LL-2,6-diaminopimelate (DAP), an intermediate involved in the bacterial biosynthesis of lysine and meso-diaminopimelic acid, an essential component of bacterial cell walls. The chain is Succinyl-diaminopimelate desuccinylase from Ehrlichia ruminantium (strain Gardel).